We begin with the raw amino-acid sequence, 35 residues long: Cupiennin-1d (35 aa).

Position 35 is a glutamic acid 1-amide (glutamate 35).

This sequence belongs to the cationic peptide 04 (cupiennin) family. 01 subfamily. In terms of tissue distribution, expressed by the venom gland.

Its subcellular location is the secreted. Has antimicrobial activity against B.subtilis, E.coli, E.faecalis, P.aeruginosa, and S.aureus. Has insecticidal and hemolytic activities. Probably acts by disturbing membrane function with its amphipathic structure. This Cupiennius salei (American wandering spider) protein is Cupiennin-1d.